The primary structure comprises 218 residues: Pyridoxine/pyridoxamine 5'-phosphate oxidase (218 aa).

Residues 12-15 (RMSY) and arginine 70 each bind substrate. Residues 65–70 (RTVLLR), 80–81 (YT), lysine 87, and glutamine 109 contribute to the FMN site. Residues tyrosine 127, arginine 131, and serine 135 each coordinate substrate. FMN-binding positions include 145-146 (QS) and tryptophan 191. 197-199 (RLH) is a substrate binding site. Residue arginine 201 coordinates FMN.

It belongs to the pyridoxamine 5'-phosphate oxidase family. As to quaternary structure, homodimer. FMN serves as cofactor.

The enzyme catalyses pyridoxamine 5'-phosphate + O2 + H2O = pyridoxal 5'-phosphate + H2O2 + NH4(+). The catalysed reaction is pyridoxine 5'-phosphate + O2 = pyridoxal 5'-phosphate + H2O2. It participates in cofactor metabolism; pyridoxal 5'-phosphate salvage; pyridoxal 5'-phosphate from pyridoxamine 5'-phosphate: step 1/1. It functions in the pathway cofactor metabolism; pyridoxal 5'-phosphate salvage; pyridoxal 5'-phosphate from pyridoxine 5'-phosphate: step 1/1. Functionally, catalyzes the oxidation of either pyridoxine 5'-phosphate (PNP) or pyridoxamine 5'-phosphate (PMP) into pyridoxal 5'-phosphate (PLP). The polypeptide is Pyridoxine/pyridoxamine 5'-phosphate oxidase (Acinetobacter baylyi (strain ATCC 33305 / BD413 / ADP1)).